The following is a 265-amino-acid chain: Putative carbamate hydrolase RutD (265 aa).

The 103-residue stretch at 21–123 (PILLSAGMGG…TIVNGWARAD (103 aa)) folds into the AB hydrolase-1 domain.

Belongs to the AB hydrolase superfamily. Hydrolase RutD family.

It carries out the reaction carbamate + 2 H(+) = NH4(+) + CO2. In terms of biological role, involved in pyrimidine catabolism. May facilitate the hydrolysis of carbamate, a reaction that can also occur spontaneously. The sequence is that of Putative carbamate hydrolase RutD from Azorhizobium caulinodans (strain ATCC 43989 / DSM 5975 / JCM 20966 / LMG 6465 / NBRC 14845 / NCIMB 13405 / ORS 571).